A 339-amino-acid polypeptide reads, in one-letter code: Coproporphyrin III ferrochelatase (339 aa).

Positions 52 and 121 each coordinate Fe-coproporphyrin III. His-181 and Glu-264 together coordinate Fe(2+).

The protein belongs to the ferrochelatase family.

It is found in the cytoplasm. It catalyses the reaction Fe-coproporphyrin III + 2 H(+) = coproporphyrin III + Fe(2+). It functions in the pathway porphyrin-containing compound metabolism; protoheme biosynthesis. In terms of biological role, involved in coproporphyrin-dependent heme b biosynthesis. Catalyzes the insertion of ferrous iron into coproporphyrin III to form Fe-coproporphyrin III. This is Coproporphyrin III ferrochelatase from Mycolicibacterium vanbaalenii (strain DSM 7251 / JCM 13017 / BCRC 16820 / KCTC 9966 / NRRL B-24157 / PYR-1) (Mycobacterium vanbaalenii).